A 351-amino-acid polypeptide reads, in one-letter code: UPF0104 membrane protein MTH_887 (351 aa).

The next 8 membrane-spanning stretches (helical) occupy residues 20-40 (IVLSFLAVAVVIFLIGFFAGF), 51-71 (SPYFLALNFVLEAIILILWTL), 137-157 (VFEFIPFALISILSAVLIMTW), 165-185 (IVVSVLILVTIAGFSLAVYAG), 244-264 (FVIGFFISLGMWALDVCRLYV), 275-295 (AVPLIIIYTVGILISLLPILP), 304-324 (ILVGLFAVAGIGADYVMAASV), and 328-348 (IASYIAPTLIGLIAAIYYGKQ).

Belongs to the UPF0104 family.

It is found in the cell membrane. This Methanothermobacter thermautotrophicus (strain ATCC 29096 / DSM 1053 / JCM 10044 / NBRC 100330 / Delta H) (Methanobacterium thermoautotrophicum) protein is UPF0104 membrane protein MTH_887.